A 629-amino-acid polypeptide reads, in one-letter code: DNA mismatch repair protein MutL (629 aa).

It belongs to the DNA mismatch repair MutL/HexB family.

Its function is as follows. This protein is involved in the repair of mismatches in DNA. It is required for dam-dependent methyl-directed DNA mismatch repair. May act as a 'molecular matchmaker', a protein that promotes the formation of a stable complex between two or more DNA-binding proteins in an ATP-dependent manner without itself being part of a final effector complex. The chain is DNA mismatch repair protein MutL from Rhodospirillum rubrum (strain ATCC 11170 / ATH 1.1.1 / DSM 467 / LMG 4362 / NCIMB 8255 / S1).